Here is a 943-residue protein sequence, read N- to C-terminus: Isoleucine--tRNA ligase (943 aa).

The 'HIGH' region signature appears at 59-69 (PYANGQIHLGH). Glutamate 577 serves as a coordination point for L-isoleucyl-5'-AMP. The short motif at 618 to 622 (KMSKS) is the 'KMSKS' region element. Lysine 621 contacts ATP. 4 residues coordinate Zn(2+): cysteine 906, cysteine 909, cysteine 926, and cysteine 929.

This sequence belongs to the class-I aminoacyl-tRNA synthetase family. IleS type 1 subfamily. In terms of assembly, monomer. Requires Zn(2+) as cofactor.

It localises to the cytoplasm. The catalysed reaction is tRNA(Ile) + L-isoleucine + ATP = L-isoleucyl-tRNA(Ile) + AMP + diphosphate. Catalyzes the attachment of isoleucine to tRNA(Ile). As IleRS can inadvertently accommodate and process structurally similar amino acids such as valine, to avoid such errors it has two additional distinct tRNA(Ile)-dependent editing activities. One activity is designated as 'pretransfer' editing and involves the hydrolysis of activated Val-AMP. The other activity is designated 'posttransfer' editing and involves deacylation of mischarged Val-tRNA(Ile). The protein is Isoleucine--tRNA ligase of Xylella fastidiosa (strain M12).